The sequence spans 592 residues: 1,4-alpha-glucan branching enzyme GlgB 2 (592 aa).

The active-site Nucleophile is the D274. E327 acts as the Proton donor in catalysis.

It belongs to the glycosyl hydrolase 13 family. GlgB subfamily. As to quaternary structure, monomer.

It catalyses the reaction Transfers a segment of a (1-&gt;4)-alpha-D-glucan chain to a primary hydroxy group in a similar glucan chain.. It participates in glycan biosynthesis; glycogen biosynthesis. In terms of biological role, catalyzes the formation of the alpha-1,6-glucosidic linkages in glycogen by scission of a 1,4-alpha-linked oligosaccharide from growing alpha-1,4-glucan chains and the subsequent attachment of the oligosaccharide to the alpha-1,6 position. This is 1,4-alpha-glucan branching enzyme GlgB 2 from Streptomyces avermitilis (strain ATCC 31267 / DSM 46492 / JCM 5070 / NBRC 14893 / NCIMB 12804 / NRRL 8165 / MA-4680).